Reading from the N-terminus, the 298-residue chain is MTRHGKNCTAGAVYTYYEKKKDTAASGYGTQTVRLSKDAVKDFDCCCLSLQPCKDPVVTSDGYIYEKEAILEYILHQKKEIARQMKAYDKQKNAKKAEMDELNKAAKESQMKAFLDKEMTIVSKPLNPFTRKSDSGADTAEPSGSQQSSEEKGKQLPSFWIPSLTPEAKTSLVKKPDKTVYCPMSGKPLKMKDLIPVHFTAVDEKVDRVGLINRQDRYVCAVTRDMLGNSVPCAVLRPSGAVVTMECVEKLIKKDMIDPISGDKLHERDIIMLQRGGTGFSGSGVLLQAKEARPVMQA.

The Nuclear localization signal signature appears at 78–101 (KKEIARQMKAYDKQKNAKKAEMDE). Residues 126 to 157 (LNPFTRKSDSGADTAEPSGSQQSSEEKGKQLP) are disordered.

The protein belongs to the NOSIP family.

The protein localises to the cytoplasm. Its subcellular location is the nucleus. It catalyses the reaction S-ubiquitinyl-[E2 ubiquitin-conjugating enzyme]-L-cysteine + [acceptor protein]-L-lysine = [E2 ubiquitin-conjugating enzyme]-L-cysteine + N(6)-ubiquitinyl-[acceptor protein]-L-lysine.. E3 ubiquitin-protein ligase that is essential for proper development of the forebrain, the eye, and the face. Negatively regulates nitric oxide production by inducing nitric oxide synthase translocation to actin cytoskeleton and inhibiting its enzymatic activity. In Xenopus tropicalis (Western clawed frog), this protein is Nitric oxide synthase-interacting protein (nosip).